Consider the following 91-residue polypeptide: Protein sigN139 (91 aa).

Asn23 and Asn34 each carry an N-linked (GlcNAc...) asparagine glycan. Residues 46–68 traverse the membrane as a helical segment; it reads LLPVVAFISGTVTSITGLVAGAL.

Its subcellular location is the membrane. The polypeptide is Protein sigN139 (Dictyostelium discoideum (Social amoeba)).